A 322-amino-acid polypeptide reads, in one-letter code: Probable transcription factor KAN3 (322 aa).

The segment at 1 to 35 (MELFPSQPDLYLKISRRREEEQEKESQELQEQEVE) is disordered. The span at 17-35 (RREEEQEKESQELQEQEVE) shows a compositional bias: basic and acidic residues. The region spanning 161-221 (GVRAPRMRWT…HLQMYRTIKS (61 aa)) is the HTH myb-type domain. The segment at residues 192-217 (PKSVLELMDVQDLTLAHVKSHLQMYR) is a DNA-binding region (H-T-H motif). 2 disordered regions span residues 222 to 244 (TEKP…NSER) and 267 to 322 (KASS…NLSP). Composition is skewed to polar residues over residues 224 to 241 (KPTT…SQVN) and 299 to 322 (LTGT…NLSP).

As to expression, expressed in developing phloem.

It is found in the nucleus. Probable transcription factor that regulates lateral organ polarity. Plays a role in lateral root formation and development. This Arabidopsis thaliana (Mouse-ear cress) protein is Probable transcription factor KAN3 (KAN3).